Reading from the N-terminus, the 559-residue chain is Fanconi-associated nuclease 1 homolog (559 aa).

Residues glutamate 386, aspartate 507, glutamate 522, and valine 523 each contribute to the Mn(2+) site. The VRR-NUC domain maps to 443–555 (DGSYRDAIRC…MPVAVCYVRW (113 aa)).

This sequence belongs to the FAN1 family. It depends on Mn(2+) as a cofactor. Requires Mg(2+) as cofactor.

The enzyme catalyses Hydrolytically removes 5'-nucleotides successively from the 3'-hydroxy termini of 3'-hydroxy-terminated oligonucleotides.. Nuclease required for the repair of DNA interstrand cross-links (ICL). Acts as a 5'-3' exonuclease that anchors at a cut end of DNA and cleaves DNA successively at every third nucleotide, allowing to excise an ICL from one strand through flanking incisions. Also has endonuclease activity toward 5'-flaps. The protein is Fanconi-associated nuclease 1 homolog of Pseudomonas aeruginosa (strain ATCC 15692 / DSM 22644 / CIP 104116 / JCM 14847 / LMG 12228 / 1C / PRS 101 / PAO1).